Reading from the N-terminus, the 313-residue chain is Dihydroorotate dehydrogenase B (NAD(+)), catalytic subunit (313 aa).

FMN is bound by residues Ser21 and 45–46 (KA). Residues Lys45 and 69 to 73 (NAIGL) contribute to the substrate site. FMN-binding residues include Asn99 and Asn127. Asn127 provides a ligand contact to substrate. The Nucleophile role is filled by Cys130. Residue Ile191 participates in FMN binding. Residue 192–193 (NT) participates in substrate binding. Residues Gly217, 243-244 (GG), and 265-266 (GT) each bind FMN.

This sequence belongs to the dihydroorotate dehydrogenase family. Type 1 subfamily. In terms of assembly, heterotetramer of 2 PyrK and 2 PyrD type B subunits. FMN is required as a cofactor.

The protein localises to the cytoplasm. The catalysed reaction is (S)-dihydroorotate + NAD(+) = orotate + NADH + H(+). Its pathway is pyrimidine metabolism; UMP biosynthesis via de novo pathway; orotate from (S)-dihydroorotate (NAD(+) route): step 1/1. In terms of biological role, catalyzes the conversion of dihydroorotate to orotate with NAD(+) as electron acceptor. The chain is Dihydroorotate dehydrogenase B (NAD(+)), catalytic subunit (pyrD) from Bacillus caldolyticus.